The sequence spans 659 residues: Forkhead box protein P1-B (659 aa).

Composition is skewed to polar residues over residues 1–16 and 32–41; these read MMQE…TAHQ and KSTTPSSDIT. 2 disordered regions span residues 1-41 and 229-263; these read MMQE…SDIT and ENSV…NGQY. A C2H2-type zinc finger spans residues 289–314; sequence GVCKWPGCEAVFEDFQSFLKHLNNEH. The segment at 331–352 is leucine-zipper; the sequence is VQQLELQLAKDKERLQAMMTHL. The segment at 365-369 is CTBP1-binding; that stretch reads PLNLV. The segment at 379-413 is disordered; that stretch reads PAASPPLSLPQTPTTPTAPLTPLSQTHSVITPTSL. The segment covering 387-404 has biased composition (low complexity); sequence LPQTPTTPTAPLTPLSQT. A DNA-binding region (fork-head) is located at residues 448 to 538; it reads RPPFTYASLI…PQKISGSPAL (91 aa). Residues 590–659 are disordered; sequence GAMDHGNSNG…EDDHGTEDML (70 aa). The segment covering 595 to 605 has biased composition (polar residues); the sequence is GNSNGSDSSPG. A compositionally biased stretch (basic and acidic residues) spans 641–659; that stretch reads PDFDHHRDYEDDHGTEDML.

Shows complex and dynamic expression during early embryonic development. Prominent in many regions of the developing central nervous system, particularly in midbrain-hindbrain boundary, hindbrain and spinal cord. Strongly expressed in the retina, ear, branchial arches, hatching gland, heart, pronephric duct, gut, proctodeum, pectoral fin and swim bladder.

It localises to the nucleus. Transcriptional repressor. In Danio rerio (Zebrafish), this protein is Forkhead box protein P1-B (foxp1b).